The primary structure comprises 29 residues: Beta-theraphotoxin-Gr1a (29 aa).

Intrachain disulfides connect Cys2–Cys16, Cys9–Cys21, and Cys15–Cys25.

This sequence belongs to the neurotoxin 30 (phrixotoxin) family. Expressed by the venom gland.

The protein localises to the secreted. Its function is as follows. Inhibits voltage-gated sodium channels Nav1.1/SCN1A (IC(50)=630 nM), Nav1.2/SCN2A (IC(50)=230 nM), Nav1.3/SCN3A (IC(50)=770 nM), Nav1.4/SCN4A (IC(50)=1290 nM), Nav1.6/SCN8A (IC(50)=630 nM), Nav1.7/SCN9A (IC(50)=15.3-1000 nM) and potassium channels Kv11.1/KCNH2 (IC(50)=4.2 uM). The protein is Beta-theraphotoxin-Gr1a of Grammostola rosea (Chilean rose tarantula).